The chain runs to 141 residues: Large ribosomal subunit protein uL11 (141 aa).

The protein belongs to the universal ribosomal protein uL11 family. As to quaternary structure, part of the ribosomal stalk of the 50S ribosomal subunit. Interacts with L10 and the large rRNA to form the base of the stalk. L10 forms an elongated spine to which L12 dimers bind in a sequential fashion forming a multimeric L10(L12)X complex. Post-translationally, one or more lysine residues are methylated.

Its function is as follows. Forms part of the ribosomal stalk which helps the ribosome interact with GTP-bound translation factors. The sequence is that of Large ribosomal subunit protein uL11 from Nostoc sp. (strain PCC 7120 / SAG 25.82 / UTEX 2576).